We begin with the raw amino-acid sequence, 521 residues long: 56 kDa type-specific antigen (521 aa).

The first 22 residues, 1-22, serve as a signal peptide directing secretion; it reads MRKIMLIASAMSALSLPFSANA. A helical transmembrane segment spans residues 64–86; it reads LPLIKGMPFGVTLAAGMTITPGV. The segment at 386–415 is disordered; the sequence is LGVDQGQEGGCSKDKKQSDTTAEESKKEGK. The segment covering 396–415 has biased composition (basic and acidic residues); it reads CSKDKKQSDTTAEESKKEGK. A helical transmembrane segment spans residues 469-484; it reads TGMVGSLALGVAANVA.

It is found in the cell membrane. Functionally, may be an adherent factor for rickettsial adsorption to the host-cell surface and a determinant of virulence of individual rickettsial strain. It is the major outer membrane protein. The protein is 56 kDa type-specific antigen of Orientia tsutsugamushi (Rickettsia tsutsugamushi).